The following is a 332-amino-acid chain: Stage II sporulation protein B (332 aa).

The span at 1–10 (MKKRKNKKNS) shows a compositional bias: basic residues. Positions 1–71 (MKKRKNKKNS…EHPDEDEFNW (71 aa)) are disordered. The span at 11–27 (KAAEKALKVTINGKEET) shows a compositional bias: basic and acidic residues. The chain crosses the membrane as a helical span at residues 112–132 (AATIAFAAVIGTGLGLFALNI). The tract at residues 139 to 174 (SAPASLEDSLGSQTAKAGDTSADKQTSGAEKQAAQT) is disordered. Positions 161–174 (DKQTSGAEKQAAQT) are enriched in polar residues. One can recognise an SPOR domain in the interval 175–250 (EGTYKTYAVQ…SDFEAWGGKE (76 aa)).

It is found in the cell membrane. Its activity is regulated as follows. Appears to be degraded early in engulfment, in correlation with its loss from polar septa. Functionally, facilitates the rapid and spatially regulated dissolution of septal peptidoglycan. The polypeptide is Stage II sporulation protein B (Bacillus subtilis (strain 168)).